A 133-amino-acid polypeptide reads, in one-letter code: NAD(P)H-quinone oxidoreductase subunit 3 (133 aa).

3 helical membrane-spanning segments follow: residues 22-44 (YLLGFLLISSLVPILSLTASRLL), 77-97 (MFALVFVIFDVETVFLYPWAV), and 102-122 (LGLLAFVEALIFITILVVGLA).

Belongs to the complex I subunit 3 family. NDH-1 can be composed of about 15 different subunits; different subcomplexes with different compositions have been identified which probably have different functions.

The protein resides in the cellular thylakoid membrane. The enzyme catalyses a plastoquinone + NADH + (n+1) H(+)(in) = a plastoquinol + NAD(+) + n H(+)(out). It carries out the reaction a plastoquinone + NADPH + (n+1) H(+)(in) = a plastoquinol + NADP(+) + n H(+)(out). NDH-1 shuttles electrons from an unknown electron donor, via FMN and iron-sulfur (Fe-S) centers, to quinones in the respiratory and/or the photosynthetic chain. The immediate electron acceptor for the enzyme in this species is believed to be plastoquinone. Couples the redox reaction to proton translocation, and thus conserves the redox energy in a proton gradient. Cyanobacterial NDH-1 also plays a role in inorganic carbon-concentration. The chain is NAD(P)H-quinone oxidoreductase subunit 3 from Synechococcus sp. (strain ATCC 27144 / PCC 6301 / SAUG 1402/1) (Anacystis nidulans).